Consider the following 271-residue polypeptide: Dermonecrotic toxin LhSicTox-alphaIA2bv (271 aa).

Residue histidine 3 is part of the active site. Mg(2+) contacts are provided by glutamate 23 and aspartate 25. Intrachain disulfides connect cysteine 43–cysteine 49 and cysteine 45–cysteine 188. Aspartate 83 contacts Mg(2+).

The protein belongs to the arthropod phospholipase D family. Class II subfamily. The cofactor is Mg(2+). In terms of tissue distribution, expressed by the venom gland.

It is found in the secreted. The enzyme catalyses an N-(acyl)-sphingosylphosphocholine = an N-(acyl)-sphingosyl-1,3-cyclic phosphate + choline. It carries out the reaction an N-(acyl)-sphingosylphosphoethanolamine = an N-(acyl)-sphingosyl-1,3-cyclic phosphate + ethanolamine. It catalyses the reaction a 1-acyl-sn-glycero-3-phosphocholine = a 1-acyl-sn-glycero-2,3-cyclic phosphate + choline. The catalysed reaction is a 1-acyl-sn-glycero-3-phosphoethanolamine = a 1-acyl-sn-glycero-2,3-cyclic phosphate + ethanolamine. Its function is as follows. Dermonecrotic toxins cleave the phosphodiester linkage between the phosphate and headgroup of certain phospholipids (sphingolipid and lysolipid substrates), forming an alcohol (often choline) and a cyclic phosphate. This toxin acts on sphingomyelin (SM). It may also act on ceramide phosphoethanolamine (CPE), lysophosphatidylcholine (LPC) and lysophosphatidylethanolamine (LPE), but not on lysophosphatidylserine (LPS), and lysophosphatidylglycerol (LPG). It acts by transphosphatidylation, releasing exclusively cyclic phosphate products as second products. Induces dermonecrosis, hemolysis, increased vascular permeability, edema, inflammatory response, and platelet aggregation. The chain is Dermonecrotic toxin LhSicTox-alphaIA2bv from Loxosceles hirsuta (Recluse spider).